A 253-amino-acid chain; its full sequence is Proproteinase E (253 aa).

Positions 1 to 11 (FSQPFSRPSSR) are cleaved as a propeptide — activation peptide. A Peptidase S1 domain is found at 12-251 (VVNGEDAVPY…FIDWIDETIA (240 aa)). 5 cysteine pairs are disulfide-bonded: Cys41–Cys57, Cys100–Cys103, Cys140–Cys206, Cys171–Cys187, and Cys196–Cys227.

Belongs to the peptidase S1 family. As to quaternary structure, monomer. The zymogen is secreted as a ternary complex composed of procarboxypeptidase A, chymotrypsinogen C and proproteinase E. In terms of tissue distribution, pancreas.

It is found in the secreted. Its subcellular location is the extracellular space. May protect procarboxypeptidase A against denaturation in the acidic environment of the ruminant duodenum. The chain is Proproteinase E from Bos taurus (Bovine).